The sequence spans 142 residues: Protein spalt-accessory (142 aa).

Positions 1–16 (MKLLIALFVLVNAVIA) are cleaved as a signal peptide. Positions 65–77 (GQGGVSPGQGGFA) are enriched in gly residues. The interval 65–142 (GQGGVSPGQG…HHEHHGHHRH (78 aa)) is disordered. A compositionally biased stretch (basic and acidic residues) spans 112–124 (NHHEYPEHHGDHH). Over residues 125–142 (REHHEHHGHHEHHGHHRH) the composition is skewed to basic residues.

Its subcellular location is the secreted. Functionally, likely to be involved in the establishment of the head. The protein is Protein spalt-accessory (sala) of Drosophila orena (Fruit fly).